We begin with the raw amino-acid sequence, 96 residues long: MPRSPLIVAVVAAALFAIVRGRDPLLDAMRREGAMDFWSAGCYARGVPLSEPPQALVVFYVALTAVMVAVALYAYGLCFRLMGASGPNKKESRGRG.

The signal sequence occupies residues 1-21 (MPRSPLIVAVVAAALFAIVRG). Topologically, residues 22 to 54 (RDPLLDAMRREGAMDFWSAGCYARGVPLSEPPQ) are virion surface. The helical transmembrane segment at 55-75 (ALVVFYVALTAVMVAVALYAY) threads the bilayer. The Intravirion segment spans residues 76–96 (GLCFRLMGASGPNKKESRGRG).

It belongs to the herpesviridae glycoprotein N family. In terms of assembly, interacts (via N-terminus) with gM (via N-terminus). The gM-gN heterodimer forms the gCII complex.

It localises to the virion membrane. The protein localises to the host membrane. It is found in the host Golgi apparatus. The protein resides in the host trans-Golgi network. Functionally, envelope glycoprotein necessary for proper maturation of gM and modulation of its membrane fusion activity. Also plays a critical role in virion morphogenesis. This chain is Envelope glycoprotein N, found in Bos taurus (Bovine).